Here is a 199-residue protein sequence, read N- to C-terminus: Recombination protein RecR (199 aa).

The C4-type zinc-finger motif lies at 57–72 (CERCNNLSEAPLCAVC). The region spanning 80–174 (SILCVVESPA…TISRIARGVP (95 aa)) is the Toprim domain.

It belongs to the RecR family.

In terms of biological role, may play a role in DNA repair. It seems to be involved in an RecBC-independent recombinational process of DNA repair. It may act with RecF and RecO. The sequence is that of Recombination protein RecR from Acidithiobacillus ferrooxidans (strain ATCC 23270 / DSM 14882 / CIP 104768 / NCIMB 8455) (Ferrobacillus ferrooxidans (strain ATCC 23270)).